The sequence spans 265 residues: 3-methyl-2-oxobutanoate hydroxymethyltransferase (265 aa).

Positions 44 and 83 each coordinate Mg(2+). 3-methyl-2-oxobutanoate is bound by residues 44 to 45 (DS), Asp83, and Lys113. Glu115 is a binding site for Mg(2+). Glu182 (proton acceptor) is an active-site residue.

Belongs to the PanB family. In terms of assembly, homodecamer; pentamer of dimers. The cofactor is Mg(2+).

It is found in the cytoplasm. It carries out the reaction 3-methyl-2-oxobutanoate + (6R)-5,10-methylene-5,6,7,8-tetrahydrofolate + H2O = 2-dehydropantoate + (6S)-5,6,7,8-tetrahydrofolate. It participates in cofactor biosynthesis; (R)-pantothenate biosynthesis; (R)-pantoate from 3-methyl-2-oxobutanoate: step 1/2. Its function is as follows. Catalyzes the reversible reaction in which hydroxymethyl group from 5,10-methylenetetrahydrofolate is transferred onto alpha-ketoisovalerate to form ketopantoate. This Aquifex aeolicus (strain VF5) protein is 3-methyl-2-oxobutanoate hydroxymethyltransferase.